We begin with the raw amino-acid sequence, 314 residues long: Triosephosphate isomerase, chloroplastic (314 aa).

The span at 1–22 (MAVASTSLASQLSGPKSLSQPY) shows a compositional bias: polar residues. Residues 1–25 (MAVASTSLASQLSGPKSLSQPYSGL) form a disordered region. A chloroplast-targeting transit peptide spans 1-59 (MAVASTSLASQLSGPKSLSQPYSGLRRSCPKLDQSHSSLFQHLSLSSSSRKASRAVVAM). 2 residues coordinate substrate: asparagine 70 and lysine 72. The active-site Electrophile is histidine 154. Glutamate 224 serves as the catalytic Proton acceptor.

Belongs to the triosephosphate isomerase family. As to quaternary structure, homodimer.

It localises to the plastid. Its subcellular location is the chloroplast. It catalyses the reaction D-glyceraldehyde 3-phosphate = dihydroxyacetone phosphate. Its pathway is carbohydrate biosynthesis; Calvin cycle. This is Triosephosphate isomerase, chloroplastic (TPI) from Fragaria ananassa (Strawberry).